Reading from the N-terminus, the 156-residue chain is 6,7-dimethyl-8-ribityllumazine synthase (156 aa).

5-amino-6-(D-ribitylamino)uracil-binding positions include phenylalanine 23, 57–59 (AFE), and 81–83 (AVI). (2S)-2-hydroxy-3-oxobutyl phosphate is bound at residue 86-87 (ST). Catalysis depends on histidine 89, which acts as the Proton donor. Phenylalanine 114 contacts 5-amino-6-(D-ribitylamino)uracil. A (2S)-2-hydroxy-3-oxobutyl phosphate-binding site is contributed by arginine 128.

Belongs to the DMRL synthase family.

The enzyme catalyses (2S)-2-hydroxy-3-oxobutyl phosphate + 5-amino-6-(D-ribitylamino)uracil = 6,7-dimethyl-8-(1-D-ribityl)lumazine + phosphate + 2 H2O + H(+). It participates in cofactor biosynthesis; riboflavin biosynthesis; riboflavin from 2-hydroxy-3-oxobutyl phosphate and 5-amino-6-(D-ribitylamino)uracil: step 1/2. Functionally, catalyzes the formation of 6,7-dimethyl-8-ribityllumazine by condensation of 5-amino-6-(D-ribitylamino)uracil with 3,4-dihydroxy-2-butanone 4-phosphate. This is the penultimate step in the biosynthesis of riboflavin. This is 6,7-dimethyl-8-ribityllumazine synthase from Campylobacter lari (strain RM2100 / D67 / ATCC BAA-1060).